A 447-amino-acid chain; its full sequence is UDP-N-acetylmuramoylalanine--D-glutamate ligase (447 aa).

112-118 serves as a coordination point for ATP; sequence GTNGKST.

Belongs to the MurCDEF family.

The protein localises to the cytoplasm. It catalyses the reaction UDP-N-acetyl-alpha-D-muramoyl-L-alanine + D-glutamate + ATP = UDP-N-acetyl-alpha-D-muramoyl-L-alanyl-D-glutamate + ADP + phosphate + H(+). Its pathway is cell wall biogenesis; peptidoglycan biosynthesis. In terms of biological role, cell wall formation. Catalyzes the addition of glutamate to the nucleotide precursor UDP-N-acetylmuramoyl-L-alanine (UMA). This chain is UDP-N-acetylmuramoylalanine--D-glutamate ligase, found in Legionella pneumophila subsp. pneumophila (strain Philadelphia 1 / ATCC 33152 / DSM 7513).